The sequence spans 495 residues: Tyrosine 3-monooxygenase (495 aa).

Phosphoserine; by CaMK2 is present on Ser19. Ser31 carries the post-translational modification Phosphoserine. Phosphoserine; by CaMK2 and PKA is present on Ser40. Residues 41 to 53 (LIEDARKEREKAE) show a composition bias toward basic and acidic residues. Residues 41–65 (LIEDARKEREKAEAASAASSEPGDL) form a disordered region. Fe cation contacts are provided by His328, His333, and Glu373. Position 469 is a phosphoserine (Ser469).

This sequence belongs to the biopterin-dependent aromatic amino acid hydroxylase family. As to quaternary structure, homotetramer. Interacts (when phosphorylated at Ser-19) with YWHAG; one YWHAG dimer bounds to one TH tetramer this interaction may influence the phosphorylation and dephosphorylation of other sites. Fe(2+) serves as cofactor. Phosphorylated on Ser-19, Ser-31 and Ser-40 by several protein kinases with different site specificities. Phosphorylation at Ser-31 and Ser-40 leads to an increase of TH activity. Phosphorylation at Ser-40 activates the enzyme and also counteracts the feedback inhibition of TH by catecholamines. Phosphorylation of Ser-19 and Ser-31 triggers the proteasomal degradation of TH through the ubiquitin-proteasome pathway. Phosphorylation at Ser-31 facilitates transport of TH from the soma to the nerve terminals via the microtubule network. Phosphorylation at Ser-19 induces the high-affinity binding to the 14-3-3 protein YWHAG; this interaction may influence the phosphorylation and dephosphorylation of other sites. Ser-19 increases the phosphorylation at Ser-40 in a hierarchical manner, leading to increased activity.

It localises to the cytoplasm. It is found in the perinuclear region. The protein resides in the nucleus. The protein localises to the cell projection. Its subcellular location is the axon. It localises to the cytoplasmic vesicle. It is found in the secretory vesicle. The protein resides in the synaptic vesicle. It carries out the reaction (6R)-L-erythro-5,6,7,8-tetrahydrobiopterin + L-tyrosine + O2 = (4aS,6R)-4a-hydroxy-L-erythro-5,6,7,8-tetrahydrobiopterin + L-dopa. The protein operates within catecholamine biosynthesis; dopamine biosynthesis; dopamine from L-tyrosine: step 1/2. Inhibited in feedback fashion by the catecholamine neurotransmitters, especially by dopamine in competition with tetrahydrobiopterin. Phosphorylation of several Ser/Thr residues in the N-terminus regulates the catalytic activity. Ser-31 and Ser-40 are readily phosphorylated to activate the catalytic activity. A Cysteine modification induced by N-ethylmaleimide (NEM), inhibits tyrosine 3-monooxygenase activity through the modification of the Cys-174. Functionally, catalyzes the conversion of L-tyrosine to L-dihydroxyphenylalanine (L-Dopa), the rate-limiting step in the biosynthesis of cathecolamines, dopamine, noradrenaline, and adrenaline. Uses tetrahydrobiopterin and molecular oxygen to convert tyrosine to L-Dopa. In addition to tyrosine, is able to catalyze the hydroxylation of phenylalanine and tryptophan with lower specificity. Positively regulates the regression of retinal hyaloid vessels during postnatal development. In Canis lupus familiaris (Dog), this protein is Tyrosine 3-monooxygenase (TH).